Reading from the N-terminus, the 274-residue chain is 16S rRNA (guanine(1405)-N(7))-methyltransferase (274 aa).

S-adenosyl-L-methionine is bound by residues 102–108 (HISTRER), alanine 133, aspartate 156, 182–183 (DL), leucine 198, and glutamine 207.

It belongs to the methyltransferase superfamily. Aminoglycoside resistance family.

It carries out the reaction guanosine(1405) in 16S rRNA + S-adenosyl-L-methionine = N(7)-methylguanosine(1405) in 16S rRNA + S-adenosyl-L-homocysteine. Functionally, specifically methylates the N(7) position of guanine 1405 in 16S rRNA. Confers resistance to various aminoglycosides, including gentamicin, kanamycin and sisomicin. This is 16S rRNA (guanine(1405)-N(7))-methyltransferase (sgm) from Micromonospora zionensis.